A 195-amino-acid polypeptide reads, in one-letter code: Imidazoleglycerol-phosphate dehydratase (195 aa).

It belongs to the imidazoleglycerol-phosphate dehydratase family.

Its subcellular location is the cytoplasm. It catalyses the reaction D-erythro-1-(imidazol-4-yl)glycerol 3-phosphate = 3-(imidazol-4-yl)-2-oxopropyl phosphate + H2O. Its pathway is amino-acid biosynthesis; L-histidine biosynthesis; L-histidine from 5-phospho-alpha-D-ribose 1-diphosphate: step 6/9. This Burkholderia cenocepacia (strain ATCC BAA-245 / DSM 16553 / LMG 16656 / NCTC 13227 / J2315 / CF5610) (Burkholderia cepacia (strain J2315)) protein is Imidazoleglycerol-phosphate dehydratase.